Consider the following 644-residue polypeptide: uncharacterized protein (644 aa).

A disordered region spans residues 1 to 35 (MKANGLDNDPARTGMERTDIDSEHPEAQPLLNNNH). Residues 1-90 (MKANGLDNDP…ILNILILINT (90 aa)) lie on the Cytoplasmic side of the membrane. The segment covering 14 to 26 (GMERTDIDSEHPE) has biased composition (basic and acidic residues). Residues serine 22, serine 56, and serine 63 each carry the phosphoserine modification. A helical transmembrane segment spans residues 91-111 (IWLVTTLISDFFFNINILFGF). The Vacuolar segment spans residues 112 to 122 (SNRYASFNDLT). Residues 123 to 143 (LIFISIIANSFNLWFNKLGLY) form a helical membrane-spanning segment. Residues 144 to 147 (SALD) lie on the Cytoplasmic side of the membrane. The helical transmembrane segment at 148–168 (YSLNVTLCVLTLFNLALTYLI) threads the bilayer. The Vacuolar segment spans residues 169–174 (KYTRQR). Residues 175-195 (IGFVGTFTYLWTSFSFFIGAI) form a helical membrane-spanning segment. Residues 196 to 271 (LDWYLLFYNN…EWVSIGFRNT (76 aa)) lie on the Cytoplasmic side of the membrane. Positions 225-251 (NENHTNSTENRDRSQYGSGSPTPTHRS) are disordered. A compositionally biased stretch (polar residues) spans 239–251 (QYGSGSPTPTHRS). Serine 244 carries the post-translational modification Phosphoserine. Residues 272–292 (IKFLILIFFALFTLNTLLTTL) form a helical membrane-spanning segment. Over 293-644 (DTYRLTHKLP…IGELGKLTED (352 aa)) the chain is Vacuolar. An AB hydrolase-1 domain is found at 348–619 (PIILFEHGGY…IVEGGHEIYK (272 aa)). The segment at 469–492 (GRGDGDDGDDGNGNDGDGRNHDKT) is disordered.

It localises to the vacuole membrane. This is an uncharacterized protein from Saccharomyces cerevisiae (strain ATCC 204508 / S288c) (Baker's yeast).